Reading from the N-terminus, the 485-residue chain is 4-alpha-glucanotransferase (485 aa).

Belongs to the disproportionating enzyme family.

The protein localises to the cytoplasm. The enzyme catalyses Transfers a segment of a (1-&gt;4)-alpha-D-glucan to a new position in an acceptor, which may be glucose or a (1-&gt;4)-alpha-D-glucan.. This is 4-alpha-glucanotransferase (malQ) from Aquifex aeolicus (strain VF5).